Reading from the N-terminus, the 773-residue chain is 4'-phosphopantetheine phosphatase (773 aa).

Position 2 is an N-acetylalanine (Ala-2). The interval 2–402 (AECRASGGGS…APELCPTQRA (401 aa)) is pantothenate kinase. The acetyl-CoA site is built by Ser-196 and Ser-199. A 3'-nitrotyrosine modification is found at Tyr-320. Residues 403 to 773 (RSGTFDLLEM…VIFKYEVPAE (371 aa)) are 4'-phosphopantetheine phosphatase. A Phosphoserine modification is found at Ser-404. Phosphothreonine is present on Thr-406. Positions 623, 624, and 659 each coordinate Mn(2+). The short motif at 724–728 (EGMGR) is the Subfamily II EGMGR motif element.

The protein in the N-terminal section; belongs to the type II pantothenate kinase family. It in the C-terminal section; belongs to the damage-control phosphatase family. Phosphopantetheine phosphatase (II) subfamily. Homodimer. Interacts with PKM. Requires Mn(2+) as cofactor. It depends on Ni(2+) as a cofactor.

The protein resides in the cytoplasm. The catalysed reaction is (R)-4'-phosphopantetheine + H2O = (R)-pantetheine + phosphate. The enzyme catalyses (R)-4'-phosphopantetheine sulfonate + H2O = (R)-pantetheine sulfonate + phosphate. It carries out the reaction (R)-4'-phospho-S-sulfopantetheine + H2O = (R)-S-sulfopantetheine + phosphate. Activity is strongly promoted by Co(2+), Ni(2+), Mg(2+) and Mn(2+). Activity is inhibited by EDTA. Phosphatase which shows a preference for 4'-phosphopantetheine and its oxidatively damaged forms (sulfonate or S-sulfonate), providing strong indirect evidence that the phosphatase activity pre-empts damage in the coenzyme A (CoA) pathway. Hydrolyzing excess 4'-phosphopantetheine could constitute a directed overflow mechanism to prevent its oxidation to the S-sulfonate, sulfonate, or other forms. Hydrolyzing 4'-phosphopantetheine sulfonate or S-sulfonate would forestall their conversion to inactive forms of CoA and acyl carrier protein. May play a role in the physiological regulation of CoA intracellular levels. The protein is 4'-phosphopantetheine phosphatase of Rattus norvegicus (Rat).